The chain runs to 293 residues: Bifunctional protein FolD (293 aa).

NADP(+) contacts are provided by residues 165–167, S190, and I231; that span reads GRS.

It belongs to the tetrahydrofolate dehydrogenase/cyclohydrolase family. Homodimer.

The enzyme catalyses (6R)-5,10-methylene-5,6,7,8-tetrahydrofolate + NADP(+) = (6R)-5,10-methenyltetrahydrofolate + NADPH. It carries out the reaction (6R)-5,10-methenyltetrahydrofolate + H2O = (6R)-10-formyltetrahydrofolate + H(+). Its pathway is one-carbon metabolism; tetrahydrofolate interconversion. Its function is as follows. Catalyzes the oxidation of 5,10-methylenetetrahydrofolate to 5,10-methenyltetrahydrofolate and then the hydrolysis of 5,10-methenyltetrahydrofolate to 10-formyltetrahydrofolate. The protein is Bifunctional protein FolD of Synechococcus sp. (strain CC9902).